The sequence spans 92 residues: DNA-directed RNA polymerase subunit Rpo5 (92 aa).

It belongs to the archaeal Rpo5/eukaryotic RPB5 RNA polymerase subunit family. As to quaternary structure, part of the RNA polymerase complex.

The protein resides in the cytoplasm. The catalysed reaction is RNA(n) + a ribonucleoside 5'-triphosphate = RNA(n+1) + diphosphate. Functionally, DNA-dependent RNA polymerase (RNAP) catalyzes the transcription of DNA into RNA using the four ribonucleoside triphosphates as substrates. This Methanopyrus kandleri (strain AV19 / DSM 6324 / JCM 9639 / NBRC 100938) protein is DNA-directed RNA polymerase subunit Rpo5.